Here is a 308-residue protein sequence, read N- to C-terminus: S-adenosylmethionine-dependent nucleotide dehydratase (308 aa).

A Radical SAM core domain is found at 7–253 (SIQELVINFH…WQSYLMINPE (247 aa)). Positions 21, 25, and 28 each coordinate [4Fe-4S] cluster.

This sequence belongs to the radical SAM superfamily. Viperin family. [4Fe-4S] cluster serves as cofactor.

It catalyses the reaction CTP + AH2 + S-adenosyl-L-methionine = 3'-deoxy-3',4'-didehydro-CTP + 5'-deoxyadenosine + L-methionine + A + H2O + H(+). The enzyme catalyses GTP + AH2 + S-adenosyl-L-methionine = 3'-deoxy-3',4'-didehydro-GTP + 5'-deoxyadenosine + L-methionine + A + H2O + H(+). The catalysed reaction is UTP + AH2 + S-adenosyl-L-methionine = 3'-deoxy-3',4'-didehydro-UTP + 5'-deoxyadenosine + L-methionine + A + H2O + H(+). In terms of biological role, expression of pVip58 in E.coli (strain MG1655) confers resistance to phages lambda, P1 and T7; delays culture collapse upon infection with T7. Catalyzes the conversion of cytidine triphosphate (CTP) to 3'-deoxy-3',4'-didehydro-CTP (ddhCTP), guanosine triphosphate (GTP) to 3'-deoxy-3',4'-didehydro-GTP (ddhGTP) and uridine triphosphate (UTP) to 3'-deoxy-3',4'-didehydro-UTP (ddhUTP), probably via a SAM-dependent radical mechanism. The modified nucleotide represses transcription from T7 RNA polymerase-directed genes (possibly by acting as chain terminators), strongly suggesting these nucleotides block viral polymerase transcription. The protein is S-adenosylmethionine-dependent nucleotide dehydratase of Pseudoalteromonas ulvae.